The chain runs to 546 residues: CTP synthase (546 aa).

Residues Met1–Leu266 are amidoligase domain. Ser14 is a CTP binding site. Position 14 (Ser14) interacts with UTP. ATP contacts are provided by residues Ser15–Ile20 and Asp72. Mg(2+) is bound by residues Asp72 and Glu140. CTP contacts are provided by residues Asp147–Glu149, Lys187–Gln192, and Lys223. Residues Lys187–Gln192 and Lys223 contribute to the UTP site. Lys239–Val241 is a binding site for ATP. One can recognise a Glutamine amidotransferase type-1 domain in the interval Val291–Arg542. Gly352 is a binding site for L-glutamine. Residue Cys379 is the Nucleophile; for glutamine hydrolysis of the active site. Residues Leu380–Gln383, Glu403, and Arg470 each bind L-glutamine. Residues His515 and Glu517 contribute to the active site.

Belongs to the CTP synthase family. As to quaternary structure, homotetramer.

The catalysed reaction is UTP + L-glutamine + ATP + H2O = CTP + L-glutamate + ADP + phosphate + 2 H(+). It catalyses the reaction L-glutamine + H2O = L-glutamate + NH4(+). It carries out the reaction UTP + NH4(+) + ATP = CTP + ADP + phosphate + 2 H(+). Its pathway is pyrimidine metabolism; CTP biosynthesis via de novo pathway; CTP from UDP: step 2/2. With respect to regulation, allosterically activated by GTP, when glutamine is the substrate; GTP has no effect on the reaction when ammonia is the substrate. The allosteric effector GTP functions by stabilizing the protein conformation that binds the tetrahedral intermediate(s) formed during glutamine hydrolysis. Inhibited by the product CTP, via allosteric rather than competitive inhibition. Functionally, catalyzes the ATP-dependent amination of UTP to CTP with either L-glutamine or ammonia as the source of nitrogen. Regulates intracellular CTP levels through interactions with the four ribonucleotide triphosphates. The sequence is that of CTP synthase from Shewanella oneidensis (strain ATCC 700550 / JCM 31522 / CIP 106686 / LMG 19005 / NCIMB 14063 / MR-1).